Consider the following 283-residue polypeptide: RNase adapter protein RapZ (283 aa).

Residue 8 to 15 (GRSGSGKS) coordinates ATP. 56-59 (DVRN) is a binding site for GTP. Residues 266 to 283 (RARGKNVQSRHRTLEKRK) are RNA-binding.

This sequence belongs to the RapZ-like family. RapZ subfamily. In terms of assembly, homotrimer.

In terms of biological role, modulates the synthesis of GlmS, by affecting the processing and stability of the regulatory small RNA GlmZ. When glucosamine-6-phosphate (GlcN6P) concentrations are high in the cell, RapZ binds GlmZ and targets it to cleavage by RNase E. Consequently, GlmZ is inactivated and unable to activate GlmS synthesis. Under low GlcN6P concentrations, RapZ is sequestered and inactivated by an other regulatory small RNA, GlmY, preventing GlmZ degradation and leading to synthesis of GlmS. The polypeptide is RNase adapter protein RapZ (Yersinia enterocolitica serotype O:8 / biotype 1B (strain NCTC 13174 / 8081)).